We begin with the raw amino-acid sequence, 286 residues long: Transcription factor egl-46 (286 aa).

The segment at 180 to 200 (CICRLCKVKYEDVFKLAQHKC) adopts a C2H2-type 1; atypical zinc-finger fold. 2 C2H2-type zinc fingers span residues 208 to 230 (YKCPDCDKVFSCPANLASHRRWH) and 248 to 271 (VSCSTCFNSFPTKKMLKLHSSTCQ).

Belongs to the INSM1 family. Interacts (via C-terminus) with egl-44 (via N-terminus); the interaction is direct; the interaction may regulate transcription. In terms of tissue distribution, expressed in touch cells, HSN cells, ventral cord motor neurons and ciliated ray neurons.

It is found in the nucleus. In terms of biological role, transcription factor. Represses expression of genes involved in differentiation of touch receptor neurons (TRN), probably acting as a heterodimer with egl-44, perhaps by occupying similar cis-regulatory elements as an unc-86/mec-3 heterodimer. Plays a role in cell fate specification of neurons, including the hook neuron HOB, the gas-sensing neuron BAG and touch receptor neurons. Plays a role in neuron differentiation by repressing the expression of zag-1 in FLP neurons, probably acting as a heterodimer with egl-44; because zag-1 represses expression of egl-46 and egl-44, together these proteins form a bistable, negative-feedback loop that regulates the choice between neuronal fates. Acts downstream of egl-44 to prevent touch cell differentiation in FLP neurons. Involved in male mating behavior, acting in concert with egl-44, via modulation of expression of polycystins lov-1 and pkd-2, homeodomain protein ceh-26, and neuropeptide-like protein nlp-8. Modulates the expression of a subset of terminal differentiation genes involved in O(2)- and CO(2)-sensing, acting in parallel to ets-5 and egl-13. May act upstream of RFX transcription factor daf-19 to regulate gene expression specifically in the HOB neuron. Plays a role in specifying commissural dendrites of the PVD nociceptive neurons, acting in concert with egl-44. In association with egl-44, regulates cell cycle exit in the neuronal Q cell lineage. The sequence is that of Transcription factor egl-46 from Caenorhabditis elegans.